A 662-amino-acid chain; its full sequence is Glycogen debranching enzyme (662 aa).

Residue aspartate 338 is the Nucleophile of the active site. Glutamate 373 acts as the Proton donor in catalysis.

It belongs to the glycosyl hydrolase 13 family.

The enzyme catalyses Hydrolysis of (1-&gt;6)-alpha-D-glucosidic linkages to branches with degrees of polymerization of three or four glucose residues in limit dextrin.. It functions in the pathway glycan degradation; glycogen degradation. Its function is as follows. Removes maltotriose and maltotetraose chains that are attached by 1,6-alpha-linkage to the limit dextrin main chain, generating a debranched limit dextrin. This chain is Glycogen debranching enzyme, found in Yersinia pestis.